Consider the following 396-residue polypeptide: S-adenosylmethionine synthase (396 aa).

Histidine 14 lines the ATP pocket. Aspartate 16 is a Mg(2+) binding site. K(+) is bound at residue glutamate 42. 2 residues coordinate L-methionine: glutamate 55 and glutamine 98. A flexible loop region spans residues glutamine 98 to glycine 108. ATP is bound by residues aspartate 167–lysine 169, arginine 234–phenylalanine 235, aspartate 243, arginine 249–lysine 250, serine 266, and lysine 270. Aspartate 243 is a binding site for L-methionine. An L-methionine-binding site is contributed by lysine 274.

This sequence belongs to the AdoMet synthase family. In terms of assembly, homotetramer; dimer of dimers. Mg(2+) serves as cofactor. It depends on K(+) as a cofactor.

It is found in the cytoplasm. It carries out the reaction L-methionine + ATP + H2O = S-adenosyl-L-methionine + phosphate + diphosphate. Its pathway is amino-acid biosynthesis; S-adenosyl-L-methionine biosynthesis; S-adenosyl-L-methionine from L-methionine: step 1/1. Catalyzes the formation of S-adenosylmethionine (AdoMet) from methionine and ATP. The overall synthetic reaction is composed of two sequential steps, AdoMet formation and the subsequent tripolyphosphate hydrolysis which occurs prior to release of AdoMet from the enzyme. This chain is S-adenosylmethionine synthase, found in Treponema pallidum (strain Nichols).